The chain runs to 226 residues: MNNALLDARLQQALGYTFSRSGLLQQALTHRSYGALNNERLEFLGDSVLNCSVARALYDAFPDLPEGSLSRLRANLVRQETLAEIAGALRLGDSLRLGEGELKSGGFRRPSILADALESLFGAVFLDAGFDEAQRVVRRLFDPLVAQIDPKASGKDPKTRLQEILQSRRLPLPEYRLVGTEGEAHDQSFIVECLLAKPVLSTRGTGKSRRAAEQEAARQACAELQR.

Residues 7–129 form the RNase III domain; that stretch reads DARLQQALGY…LFGAVFLDAG (123 aa). Glu42 lines the Mg(2+) pocket. Asp46 is an active-site residue. Mg(2+)-binding residues include Asp115 and Glu118. The active site involves Glu118. A DRBM domain is found at 156–226; that stretch reads DPKTRLQEIL…ARQACAELQR (71 aa).

This sequence belongs to the ribonuclease III family. Homodimer. The cofactor is Mg(2+).

It is found in the cytoplasm. It catalyses the reaction Endonucleolytic cleavage to 5'-phosphomonoester.. Functionally, digests double-stranded RNA. Involved in the processing of primary rRNA transcript to yield the immediate precursors to the large and small rRNAs (23S and 16S). Processes some mRNAs, and tRNAs when they are encoded in the rRNA operon. Processes pre-crRNA and tracrRNA of type II CRISPR loci if present in the organism. This Thiobacillus denitrificans (strain ATCC 25259 / T1) protein is Ribonuclease 3.